Reading from the N-terminus, the 220-residue chain is Adenylate kinase (220 aa).

10–15 (GAGKGT) serves as a coordination point for ATP. Positions 30–59 (STGDMLRAAVKAGTPLGVEAKGYMDAGKLV) are NMP. Residues T31, R36, 57-59 (KLV), 85-88 (GFPR), and Q92 each bind AMP. The LID stretch occupies residues 122 to 159 (GRRTHPASGRTYHVKFNPPKVEGHDDVTGEPLIQRDDD). Residues R123 and 132–133 (TY) each bind ATP. 2 residues coordinate AMP: R156 and R167. G206 provides a ligand contact to ATP.

This sequence belongs to the adenylate kinase family. As to quaternary structure, monomer.

The protein localises to the cytoplasm. The catalysed reaction is AMP + ATP = 2 ADP. It functions in the pathway purine metabolism; AMP biosynthesis via salvage pathway; AMP from ADP: step 1/1. Its function is as follows. Catalyzes the reversible transfer of the terminal phosphate group between ATP and AMP. Plays an important role in cellular energy homeostasis and in adenine nucleotide metabolism. This is Adenylate kinase from Burkholderia lata (strain ATCC 17760 / DSM 23089 / LMG 22485 / NCIMB 9086 / R18194 / 383).